The primary structure comprises 591 residues: CTP synthase 1 (591 aa).

K100 carries the post-translational modification N6-acetyllysine. Residues 300–554 (SIALVGKYTK…LASVGRLSHY (255 aa)) form the Glutamine amidotransferase type-1 domain. Active-site for GATase activity residues include C399, H526, and E528. Phosphoserine is present on residues S562, S568, S571, S573, S574, S575, S578, and S587. Residues 562–591 (SPRDTYSDRSGSSSPDSEITELKFPSINHD) form a disordered region. Low complexity predominate over residues 569 to 578 (DRSGSSSPDS).

Belongs to the CTP synthase family. As to expression, widely expressed.

It localises to the cytoplasm. It is found in the cytosol. The catalysed reaction is UTP + L-glutamine + ATP + H2O = CTP + L-glutamate + ADP + phosphate + 2 H(+). It participates in pyrimidine metabolism; CTP biosynthesis via de novo pathway; CTP from UDP: step 2/2. Its activity is regulated as follows. Activated by GTP and inhibited by CTP. Its function is as follows. This enzyme is involved in the de novo synthesis of CTP, a precursor of DNA, RNA and phospholipids. Catalyzes the ATP-dependent amination of UTP to CTP with either L-glutamine or ammonia as a source of nitrogen. This enzyme and its product, CTP, play a crucial role in the proliferation of activated lymphocytes and therefore in immunity. This chain is CTP synthase 1, found in Homo sapiens (Human).